Consider the following 159-residue polypeptide: Ribosomal RNA large subunit methyltransferase H (159 aa).

S-adenosyl-L-methionine contacts are provided by residues Leu76, Gly108, and 127-132 (FGQLTL).

This sequence belongs to the RNA methyltransferase RlmH family. As to quaternary structure, homodimer.

The protein localises to the cytoplasm. The enzyme catalyses pseudouridine(1915) in 23S rRNA + S-adenosyl-L-methionine = N(3)-methylpseudouridine(1915) in 23S rRNA + S-adenosyl-L-homocysteine + H(+). Specifically methylates the pseudouridine at position 1915 (m3Psi1915) in 23S rRNA. The sequence is that of Ribosomal RNA large subunit methyltransferase H from Streptococcus gordonii (strain Challis / ATCC 35105 / BCRC 15272 / CH1 / DL1 / V288).